A 493-amino-acid polypeptide reads, in one-letter code: Galactose-1-phosphate uridylyltransferase 2 (493 aa).

This sequence belongs to the galactose-1-phosphate uridylyltransferase type 2 family.

The protein resides in the cytoplasm. The catalysed reaction is alpha-D-galactose 1-phosphate + UDP-alpha-D-glucose = alpha-D-glucose 1-phosphate + UDP-alpha-D-galactose. It participates in carbohydrate metabolism; galactose metabolism. In Streptococcus pneumoniae (strain ATCC BAA-255 / R6), this protein is Galactose-1-phosphate uridylyltransferase 2 (galT2).